An 84-amino-acid polypeptide reads, in one-letter code: Large ribosomal subunit protein bL27 (84 aa).

Positions 1–25 (MAHKKAGGSSRNGRDSNGQRRGVKR) are disordered.

The protein belongs to the bacterial ribosomal protein bL27 family.

The polypeptide is Large ribosomal subunit protein bL27 (Desulfatibacillum aliphaticivorans).